Here is a 228-residue protein sequence, read N- to C-terminus: MLESIQAVQAPYYGDVSYRTPPPDLPSLLLKERIIYLGMPLFSSDDVKRQVGFDVTELIIAQLLYLEFDNPEKPIYFYINSTGTSWYTGDAIGYETEAFAICDTMRYIKPPVHTICIGQAMGTAAMILSGGTPGNRASLPHATIVLNQPRTGAQGQASDIQIRAKEVLANKRTMLEIFARNTGQDPDRLARDTDRMLYMTPAQAVEYGLIDRVLDSRKDLPAPLPSFS.

The protein belongs to the peptidase S14 family.

Has lost the two conserved residues (Ser and His) proposed to be part of the active site. Therefore it could be inactive. This Synechococcus elongatus (strain ATCC 33912 / PCC 7942 / FACHB-805) (Anacystis nidulans R2) protein is Putative ATP-dependent Clp protease proteolytic subunit-like (clpR).